The chain runs to 59 residues: uncharacterized protein (59 aa).

This is an uncharacterized protein from Sulfolobus islandicus rod-shaped virus 1 (SIRV-1).